A 452-amino-acid chain; its full sequence is Pup--protein ligase (452 aa).

Glu9 is a binding site for Mg(2+). Arg53 provides a ligand contact to ATP. A Mg(2+)-binding site is contributed by Tyr55. The active-site Proton acceptor is Asp57. Glu63 is a Mg(2+) binding site. Residues Thr66 and Trp419 each contribute to the ATP site.

This sequence belongs to the Pup ligase/Pup deamidase family. Pup-conjugating enzyme subfamily.

The enzyme catalyses ATP + [prokaryotic ubiquitin-like protein]-L-glutamate + [protein]-L-lysine = ADP + phosphate + N(6)-([prokaryotic ubiquitin-like protein]-gamma-L-glutamyl)-[protein]-L-lysine.. The protein operates within protein degradation; proteasomal Pup-dependent pathway. It functions in the pathway protein modification; protein pupylation. Catalyzes the covalent attachment of the prokaryotic ubiquitin-like protein modifier Pup to the proteasomal substrate proteins, thereby targeting them for proteasomal degradation. This tagging system is termed pupylation. The ligation reaction involves the side-chain carboxylate of the C-terminal glutamate of Pup and the side-chain amino group of a substrate lysine. The chain is Pup--protein ligase from Mycobacterium avium (strain 104).